Here is a 621-residue protein sequence, read N- to C-terminus: uncharacterized protein (621 aa).

2 disordered regions span residues Phe-92–Gln-134 and Lys-268–Ile-310. Low complexity predominate over residues Asn-94 to Gln-134. A compositionally biased stretch (acidic residues) spans Thr-296 to Ile-310. The stretch at Ala-354–Glu-401 forms a coiled coil.

This is an uncharacterized protein from Acanthamoeba polyphaga mimivirus (APMV).